The sequence spans 200 residues: WUSCHEL-related homeobox 9 (200 aa).

Positions 10-74 (VKCGRWNPTA…NHKARERHHH (65 aa)) form a DNA-binding region, homeobox; WUS-type. Positions 70–80 (ERHHHKKRRRG) are enriched in basic residues. Residues 70-118 (ERHHHKKRRRGASSPDSGSNDDDGRAAAHEGDADLVLQPPESKREARSY) form a disordered region. Positions 91-101 (DDGRAAAHEGD) are enriched in basic and acidic residues.

It belongs to the WUS homeobox family. In terms of tissue distribution, specifically expressed in the central cells of the quiescent center (QC) of the root.

It localises to the nucleus. Transcription factor which may be involved in the specification and maintenance of the stem cells (QC cells) in the root apical meristem (RAM). The protein is WUSCHEL-related homeobox 9 (WOX9) of Oryza sativa subsp. japonica (Rice).